The primary structure comprises 308 residues: Oxygen-dependent coproporphyrinogen-III oxidase (308 aa).

A substrate-binding site is contributed by Ser-92. His-96 and His-106 together coordinate a divalent metal cation. His-106 serves as the catalytic Proton donor. 108 to 110 (NVR) provides a ligand contact to substrate. The a divalent metal cation site is built by His-145 and His-175. The tract at residues 240-275 (YVEFNLVWDRGTLFGLQTGGRTESILMSMPPLVRWE) is important for dimerization. Residue 258–260 (GGR) coordinates substrate.

Belongs to the aerobic coproporphyrinogen-III oxidase family. Homodimer. A divalent metal cation is required as a cofactor.

The protein localises to the cytoplasm. It catalyses the reaction coproporphyrinogen III + O2 + 2 H(+) = protoporphyrinogen IX + 2 CO2 + 2 H2O. It functions in the pathway porphyrin-containing compound metabolism; protoporphyrin-IX biosynthesis; protoporphyrinogen-IX from coproporphyrinogen-III (O2 route): step 1/1. In terms of biological role, involved in the heme biosynthesis. Catalyzes the aerobic oxidative decarboxylation of propionate groups of rings A and B of coproporphyrinogen-III to yield the vinyl groups in protoporphyrinogen-IX. This is Oxygen-dependent coproporphyrinogen-III oxidase from Salmonella paratyphi A (strain ATCC 9150 / SARB42).